Reading from the N-terminus, the 237-residue chain is Ribosomal RNA small subunit methyltransferase G (237 aa).

S-adenosyl-L-methionine-binding positions include glycine 76, phenylalanine 81, 128-129 (VE), and arginine 147.

The protein belongs to the methyltransferase superfamily. RNA methyltransferase RsmG family.

The protein resides in the cytoplasm. Its function is as follows. Specifically methylates the N7 position of a guanine in 16S rRNA. This is Ribosomal RNA small subunit methyltransferase G from Prochlorococcus marinus (strain AS9601).